The chain runs to 261 residues: Imidazole glycerol phosphate synthase subunit HisF (261 aa).

Active-site residues include Asp-11 and Asp-130.

Belongs to the HisA/HisF family. In terms of assembly, heterodimer of HisH and HisF.

Its subcellular location is the cytoplasm. It carries out the reaction 5-[(5-phospho-1-deoxy-D-ribulos-1-ylimino)methylamino]-1-(5-phospho-beta-D-ribosyl)imidazole-4-carboxamide + L-glutamine = D-erythro-1-(imidazol-4-yl)glycerol 3-phosphate + 5-amino-1-(5-phospho-beta-D-ribosyl)imidazole-4-carboxamide + L-glutamate + H(+). It participates in amino-acid biosynthesis; L-histidine biosynthesis; L-histidine from 5-phospho-alpha-D-ribose 1-diphosphate: step 5/9. Its function is as follows. IGPS catalyzes the conversion of PRFAR and glutamine to IGP, AICAR and glutamate. The HisF subunit catalyzes the cyclization activity that produces IGP and AICAR from PRFAR using the ammonia provided by the HisH subunit. This Heliobacterium mobile (Heliobacillus mobilis) protein is Imidazole glycerol phosphate synthase subunit HisF.